The sequence spans 149 residues: Dehydrin Rab15 (149 aa).

The tract at residues methionine 1 to histidine 149 is disordered. The span at lysine 78–glutamine 93 shows a compositional bias: basic and acidic residues. The segment covering threonine 100–glycine 117 has biased composition (gly residues). A compositionally biased stretch (basic and acidic residues) spans glycine 132–histidine 149.

The protein belongs to the plant dehydrin family.

This chain is Dehydrin Rab15 (RAB15), found in Triticum aestivum (Wheat).